The chain runs to 245 residues: Peroxisome biogenesis protein 19-2 (245 aa).

The interval 17–106 (ALDDFKDLNL…LSSKQQPTGS (90 aa)) is disordered. 2 stretches are compositionally biased toward basic and acidic residues: residues 33–44 (VKKEEGDKKETE) and 71–92 (AKEDHVTEALDKLREQTRETVK). Polar residues predominate over residues 96-105 (SLSSKQQPTG). Cys242 is modified (cysteine methyl ester). Cys242 carries the S-farnesyl cysteine lipid modification. A propeptide spans 243-245 (CVM) (removed in mature form).

This sequence belongs to the peroxin-19 family. Dimer. Interacts with PEX10 (via C-terminus). In terms of processing, may be farnesylated. In terms of tissue distribution, expressed in roots, leaves, flowers, siliques and stems. Highest expression in roots and leaves.

Its subcellular location is the cytoplasm. It localises to the peroxisome membrane. In terms of biological role, contributes to morphology determination of peroxisomes, but not to import of peroxisomal matrix proteins. Required for proper post-translational import and stabilization of peroxisomal membrane proteins (PMPs). Acts as a cytosolic import receptor for PMPs and delivers them to the docking factor PEX3 at the peroxisomal membrane for subsequent insertion into the membrane. Acts as a chaperone in stabilizing or maintaining PMPs in the lipid bilayer. In Arabidopsis thaliana (Mouse-ear cress), this protein is Peroxisome biogenesis protein 19-2 (PEX19-2).